Here is a 683-residue protein sequence, read N- to C-terminus: U4/U6 small nuclear ribonucleoprotein Prp3 (683 aa).

The region spanning 1–87 (MALSKRELDE…HSKSSSDRSR (87 aa)) is the PWI domain. Basic and acidic residues predominate over residues 73 to 107 (GRSSRHSKSSSDRSRKRDLKEVFGDDSEISKESSG). The disordered stretch occupies residues 73 to 135 (GRSSRHSKSS…IPGPPSESPG (63 aa)). Residue lysine 139 forms a Glycyl lysine isopeptide (Lys-Gly) (interchain with G-Cter in SUMO2) linkage. A disordered region spans residues 153–183 (IEERKKQLSFISPPTPQPKTPSSSQPERLPI). Serine 164 is modified (phosphoserine). Threonine 167 is modified (phosphothreonine). Glycyl lysine isopeptide (Lys-Gly) (interchain with G-Cter in SUMO2) cross-links involve residues lysine 244 and lysine 252. Residues 416 to 550 (NLVEHPAQLN…VHISVYRVRN (135 aa)) form a mediates interaction with SART3 region. Phosphoserine is present on serine 619.

In terms of assembly, component of the precatalytic spliceosome (spliceosome B complex). Component of the U4/U6-U5 tri-snRNP complex, a building block of the precatalytic spliceosome (spliceosome B complex). The U4/U6-U5 tri-snRNP complex is composed of the U4, U6 and U5 snRNAs and at least PRPF3, PRPF4, PRPF6, PRPF8, PRPF31, SNRNP200, TXNL4A, SNRNP40, SNRPB, SNRPD1, SNRPD2, SNRPD3, SNRPE, SNRPF, SNRPG, DDX23, CD2BP2, PPIH, SNU13, EFTUD2, SART1 and USP39, plus LSM2, LSM3, LSM4, LSM5, LSM6, LSM7 and LSM8. Interacts directly with PRPF4. Part of a heteromeric complex containing PPIH, PRPF3 and PRPF4 that is stable in the absence of RNA. Interacts with SART3; the interaction is direct and recruits the deubiquitinase USP4 to PRPF3. Interacts with PRPF19. Interacts ('Lys-63'-linked polyubiquitinated) with PRPF8 (via the MPN (JAB/Mov34) domain); may stabilize the U4/U6-U5 tri-snRNP complex. Interacts with ERCC6. In terms of processing, ubiquitinated. Undergoes 'Lys-63'-linked polyubiquitination by PRPF19 and deubiquitination by USP4. 'Lys-63'-linked ubiquitination increases the affinity for PRPF8 and may regulate the assembly of the U4/U6-U5 tri-snRNP complex.

It localises to the nucleus. It is found in the nucleus speckle. Its function is as follows. Plays a role in pre-mRNA splicing as component of the U4/U6-U5 tri-snRNP complex that is involved in spliceosome assembly, and as component of the precatalytic spliceosome (spliceosome B complex). This chain is U4/U6 small nuclear ribonucleoprotein Prp3 (PRPF3), found in Bos taurus (Bovine).